The sequence spans 882 residues: DNA mismatch repair protein MutS (882 aa).

The segment at 1 to 22 (MTLPSDFPLEPPATNKDPHRDY) is disordered. 662–669 (GPNASGKS) contributes to the ATP binding site.

Belongs to the DNA mismatch repair MutS family.

Functionally, this protein is involved in the repair of mismatches in DNA. It is possible that it carries out the mismatch recognition step. This protein has a weak ATPase activity. This is DNA mismatch repair protein MutS from Microcystis aeruginosa (strain NIES-843 / IAM M-2473).